Here is a 287-residue protein sequence, read N- to C-terminus: Large ribosomal subunit protein uL2 (287 aa).

The tract at residues 221–287 (RGSVMNPCDH…SKRSRGGRDS (67 aa)) is disordered. Positions 258 to 287 (KTRKRNKPSNRFVLRKRRRVSKRSRGGRDS) are enriched in basic residues.

The protein belongs to the universal ribosomal protein uL2 family. As to quaternary structure, part of the 50S ribosomal subunit. Forms a bridge to the 30S subunit in the 70S ribosome.

One of the primary rRNA binding proteins. Required for association of the 30S and 50S subunits to form the 70S ribosome, for tRNA binding and peptide bond formation. It has been suggested to have peptidyltransferase activity; this is somewhat controversial. Makes several contacts with the 16S rRNA in the 70S ribosome. This chain is Large ribosomal subunit protein uL2, found in Prochlorococcus marinus (strain SARG / CCMP1375 / SS120).